The primary structure comprises 311 residues: Pyrimidine-specific ribonucleoside hydrolase RihA (311 aa).

His240 is an active-site residue.

It belongs to the IUNH family. RihA subfamily.

Its function is as follows. Hydrolyzes cytidine or uridine to ribose and cytosine or uracil, respectively. This Shigella boydii serotype 4 (strain Sb227) protein is Pyrimidine-specific ribonucleoside hydrolase RihA.